The sequence spans 483 residues: Ankyrin repeat domain-containing protein M-T5 (483 aa).

6 ANK repeats span residues 32 to 63 (SRDT…DVNG), 67 to 101 (SRTS…DVNA), 105 to 137 (DGRY…SVYV), 177 to 210 (YGFN…DSSR), 250 to 279 (LDFT…DPNV), and 283 to 312 (LGNS…TPDA). Residues 390–478 (VSVFDTAFGL…LTDDEIHDLF (89 aa)) form a PRANC/F-box-like region.

Interacts (via PRANC/F-box-like domain) with the SKP1 component of the host SCF ubiquitin ligase complex. Interacts (via N-terminus) with host AKT1.

In terms of biological role, substrate-specific adapter of SKP1-containing E3 ubiquitin-protein ligases which mediate the ubiquitination and subsequent proteasomal degradation of host target proteins including CDKN1B. Disappearance of host CDKN1B correlates with cell cycle progression through the G0/G1 checkpoint. Therefore, viruses in infected cells are protected from diverse innate host antiviral responses normally triggered by G0/G1 cell cycle arrest. This is Ankyrin repeat domain-containing protein M-T5 (m005R) from Myxoma virus (strain Lausanne) (MYXV).